The following is an 891-amino-acid chain: Alanine--tRNA ligase (891 aa).

The Zn(2+) site is built by histidine 564, histidine 568, cysteine 677, and histidine 681.

The protein belongs to the class-II aminoacyl-tRNA synthetase family. Zn(2+) is required as a cofactor.

The protein localises to the cytoplasm. The catalysed reaction is tRNA(Ala) + L-alanine + ATP = L-alanyl-tRNA(Ala) + AMP + diphosphate. Its function is as follows. Catalyzes the attachment of alanine to tRNA(Ala) in a two-step reaction: alanine is first activated by ATP to form Ala-AMP and then transferred to the acceptor end of tRNA(Ala). Also edits incorrectly charged Ser-tRNA(Ala) and Gly-tRNA(Ala) via its editing domain. The protein is Alanine--tRNA ligase of Rhodopseudomonas palustris (strain BisA53).